Here is a 296-residue protein sequence, read N- to C-terminus: Phosphatidylserine decarboxylase proenzyme (296 aa).

Catalysis depends on charge relay system; for autoendoproteolytic cleavage activity residues Asp113, His169, and Ser256. The active-site Schiff-base intermediate with substrate; via pyruvic acid; for decarboxylase activity is the Ser256. Pyruvic acid (Ser); by autocatalysis is present on Ser256.

Belongs to the phosphatidylserine decarboxylase family. PSD-B subfamily. Prokaryotic type II sub-subfamily. Heterodimer of a large membrane-associated beta subunit and a small pyruvoyl-containing alpha subunit. Pyruvate serves as cofactor. Post-translationally, is synthesized initially as an inactive proenzyme. Formation of the active enzyme involves a self-maturation process in which the active site pyruvoyl group is generated from an internal serine residue via an autocatalytic post-translational modification. Two non-identical subunits are generated from the proenzyme in this reaction, and the pyruvate is formed at the N-terminus of the alpha chain, which is derived from the carboxyl end of the proenzyme. The autoendoproteolytic cleavage occurs by a canonical serine protease mechanism, in which the side chain hydroxyl group of the serine supplies its oxygen atom to form the C-terminus of the beta chain, while the remainder of the serine residue undergoes an oxidative deamination to produce ammonia and the pyruvoyl prosthetic group on the alpha chain. During this reaction, the Ser that is part of the protease active site of the proenzyme becomes the pyruvoyl prosthetic group, which constitutes an essential element of the active site of the mature decarboxylase.

It is found in the cell membrane. It carries out the reaction a 1,2-diacyl-sn-glycero-3-phospho-L-serine + H(+) = a 1,2-diacyl-sn-glycero-3-phosphoethanolamine + CO2. The protein operates within phospholipid metabolism; phosphatidylethanolamine biosynthesis; phosphatidylethanolamine from CDP-diacylglycerol: step 2/2. Its function is as follows. Catalyzes the formation of phosphatidylethanolamine (PtdEtn) from phosphatidylserine (PtdSer). The chain is Phosphatidylserine decarboxylase proenzyme from Clostridium beijerinckii (strain ATCC 51743 / NCIMB 8052) (Clostridium acetobutylicum).